Consider the following 760-residue polypeptide: Prolyl endopeptidase FAP (760 aa).

The Cytoplasmic portion of the chain corresponds to 1–4 (MKTW). The chain crosses the membrane as a helical; Signal-anchor for type II membrane protein span at residues 5–25 (LKIVFGVATSAVLALLVMCIV). The Extracellular portion of the chain corresponds to 26-760 (LRPSRVHNSE…FLKQCFSLSD (735 aa)). 3 N-linked (GlcNAc...) asparagine glycosylation sites follow: Asn-49, Asn-92, and Asn-99. Glu-203 and Glu-204 together coordinate substrate. N-linked (GlcNAc...) asparagine glycosylation is found at Asn-227 and Asn-314. 3 disulfide bridges follow: Cys-321–Cys-332, Cys-438–Cys-441, and Cys-448–Cys-466. The stretch at 481–512 (TDQEIKILEDNKELENALKNIQLPKEEIKKLK) forms a coiled coil. The active-site Charge relay system is Ser-624. The cysteines at positions 643 and 755 are disulfide-linked. A glycan (N-linked (GlcNAc...) asparagine) is linked at Asn-679. Residues Asp-702 and His-734 each act as charge relay system in the active site.

The protein belongs to the peptidase S9B family. In terms of assembly, homodimer; homodimerization is required for activity of both plasma membrane and soluble forms. The monomer is inactive. Heterodimer with DPP4. Interacts with PLAUR; the interaction occurs at the cell surface of invadopodia membranes. Interacts with ITGB1. Interacts with ITGA3. Associates with integrin alpha-3/beta-1; the association occurs in a collagen-dependent manner at the cell surface of invadopodia membranes. In terms of processing, N-glycosylated. The N-terminus may be blocked.

The protein resides in the cell surface. It is found in the cell membrane. The protein localises to the cell projection. It localises to the lamellipodium membrane. Its subcellular location is the invadopodium membrane. The protein resides in the ruffle membrane. It is found in the membrane. The protein localises to the secreted. The catalysed reaction is Release of an N-terminal dipeptide, Xaa-Yaa-|-Zaa-, from a polypeptide, preferentially when Yaa is Pro, provided Zaa is neither Pro nor hydroxyproline.. The enzyme catalyses Hydrolysis of Pro-|-Xaa &gt;&gt; Ala-|-Xaa in oligopeptides.. Gelatinase activity is inhibited by serine-protease inhibitors, such as phenylmethylsulfonyl fluoride (PMSF), 4-(2-aminoethyl)-benzenesulfonyl fluoride hydrochloride (AEBSF), 4-amidino phenylsulfonyl fluoride (APSF) and diisopropyl fluorophosphate (DFP), N-ethylmaleimide (NEM) and phenylmethylsulfonyl fluoride (PMSF). Dipeptidyl peptidase activity is inhibited by 2,2'-azino-bis(3-ethylbenzthiazoline-6-sulfonic acid), diisopropylfluorophosphate (DFP). Prolyl endopeptidase activity is inhibited by the boronic acid peptide Ac-Gly-BoroPro, Ac-Gly-Pro-chloromethyl ketone and Thr-Ser-Gly-chloromethyl ketone. Its function is as follows. Cell surface glycoprotein serine protease that participates in extracellular matrix degradation and involved in many cellular processes including tissue remodeling, fibrosis, wound healing, inflammation and tumor growth. Both plasma membrane and soluble forms exhibit post-proline cleaving endopeptidase activity, with a marked preference for Ala/Ser-Gly-Pro-Ser/Asn/Ala consensus sequences, on substrate such as alpha-2-antiplasmin SERPINF2 and SPRY2. Degrade also gelatin, heat-denatured type I collagen, but not native collagen type I and IV, vibronectin, tenascin, laminin, fibronectin, fibrin or casein. Also has dipeptidyl peptidase activity, exhibiting the ability to hydrolyze the prolyl bond two residues from the N-terminus of synthetic dipeptide substrates provided that the penultimate residue is proline, with a preference for Ala-Pro, Ile-Pro, Gly-Pro, Arg-Pro and Pro-Pro. Natural neuropeptide hormones for dipeptidyl peptidase are the neuropeptide Y (NPY), peptide YY (PYY), substance P (TAC1) and brain natriuretic peptide 32 (NPPB). The plasma membrane form, in association with either DPP4, PLAUR or integrins, is involved in the pericellular proteolysis of the extracellular matrix (ECM), and hence promotes cell adhesion, migration and invasion through the ECM. Plays a role in tissue remodeling during development and wound healing. Participates in the cell invasiveness towards the ECM in malignant melanoma cancers. Enhances tumor growth progression by increasing angiogenesis, collagen fiber degradation and apoptosis and by reducing antitumor response of the immune system. Promotes glioma cell invasion through the brain parenchyma by degrading the proteoglycan brevican. Acts as a tumor suppressor in melanocytic cells through regulation of cell proliferation and survival in a serine protease activity-independent manner. The protein is Prolyl endopeptidase FAP of Bos taurus (Bovine).